A 428-amino-acid polypeptide reads, in one-letter code: Light-independent protochlorophyllide reductase subunit N (428 aa).

C16, C41, and C102 together coordinate [4Fe-4S] cluster.

Belongs to the BchN/ChlN family. In terms of assembly, protochlorophyllide reductase is composed of three subunits; ChlL, ChlN and ChlB. Forms a heterotetramer of two ChlB and two ChlN subunits. Requires [4Fe-4S] cluster as cofactor.

It carries out the reaction chlorophyllide a + oxidized 2[4Fe-4S]-[ferredoxin] + 2 ADP + 2 phosphate = protochlorophyllide a + reduced 2[4Fe-4S]-[ferredoxin] + 2 ATP + 2 H2O. The protein operates within porphyrin-containing compound metabolism; chlorophyll biosynthesis (light-independent). Its function is as follows. Component of the dark-operative protochlorophyllide reductase (DPOR) that uses Mg-ATP and reduced ferredoxin to reduce ring D of protochlorophyllide (Pchlide) to form chlorophyllide a (Chlide). This reaction is light-independent. The NB-protein (ChlN-ChlB) is the catalytic component of the complex. The chain is Light-independent protochlorophyllide reductase subunit N from Synechococcus sp. (strain CC9311).